A 170-amino-acid chain; its full sequence is Peptide deformylase 2 (170 aa).

2 residues coordinate Fe cation: cysteine 94 and histidine 136. Glutamate 137 is an active-site residue. Histidine 140 contributes to the Fe cation binding site.

This sequence belongs to the polypeptide deformylase family. Fe(2+) serves as cofactor.

It catalyses the reaction N-terminal N-formyl-L-methionyl-[peptide] + H2O = N-terminal L-methionyl-[peptide] + formate. In terms of biological role, removes the formyl group from the N-terminal Met of newly synthesized proteins. Requires at least a dipeptide for an efficient rate of reaction. N-terminal L-methionine is a prerequisite for activity but the enzyme has broad specificity at other positions. This is Peptide deformylase 2 from Xanthomonas campestris pv. campestris (strain ATCC 33913 / DSM 3586 / NCPPB 528 / LMG 568 / P 25).